The chain runs to 476 residues: Aspartyl/glutamyl-tRNA(Asn/Gln) amidotransferase subunit B (476 aa).

This sequence belongs to the GatB/GatE family. GatB subfamily. In terms of assembly, heterotrimer of A, B and C subunits.

It catalyses the reaction L-glutamyl-tRNA(Gln) + L-glutamine + ATP + H2O = L-glutaminyl-tRNA(Gln) + L-glutamate + ADP + phosphate + H(+). The catalysed reaction is L-aspartyl-tRNA(Asn) + L-glutamine + ATP + H2O = L-asparaginyl-tRNA(Asn) + L-glutamate + ADP + phosphate + 2 H(+). Its function is as follows. Allows the formation of correctly charged Asn-tRNA(Asn) or Gln-tRNA(Gln) through the transamidation of misacylated Asp-tRNA(Asn) or Glu-tRNA(Gln) in organisms which lack either or both of asparaginyl-tRNA or glutaminyl-tRNA synthetases. The reaction takes place in the presence of glutamine and ATP through an activated phospho-Asp-tRNA(Asn) or phospho-Glu-tRNA(Gln). The protein is Aspartyl/glutamyl-tRNA(Asn/Gln) amidotransferase subunit B of Clostridium kluyveri (strain ATCC 8527 / DSM 555 / NBRC 12016 / NCIMB 10680 / K1).